The primary structure comprises 210 residues: V-type ATP synthase subunit D (210 aa).

This sequence belongs to the V-ATPase D subunit family.

In terms of biological role, produces ATP from ADP in the presence of a proton gradient across the membrane. This chain is V-type ATP synthase subunit D, found in Coprothermobacter proteolyticus (strain ATCC 35245 / DSM 5265 / OCM 4 / BT).